The chain runs to 388 residues: Cytochrome b (388 aa).

A run of 4 helical transmembrane segments spans residues 32 to 52 (FGSL…TLAM), 76 to 98 (WLIR…LHVG), 113 to 133 (TWTI…LGYV), and 179 to 199 (FFAL…MHLI). Residues H82 and H96 each coordinate heme b. Heme b is bound by residues H183 and H197. Residue H202 coordinates a ubiquinone. Transmembrane regions (helical) follow at residues 226-246 (FIFK…IFIF), 290-310 (LLGV…PITD), 322-342 (LSKI…QLGA), and 349-369 (FIEF…IIVP).

Belongs to the cytochrome b family. In terms of assembly, fungal cytochrome b-c1 complex contains 10 subunits; 3 respiratory subunits, 2 core proteins and 5 low-molecular weight proteins. Cytochrome b-c1 complex is a homodimer. Heme b is required as a cofactor.

The protein localises to the mitochondrion inner membrane. Its function is as follows. Component of the ubiquinol-cytochrome c reductase complex (complex III or cytochrome b-c1 complex) that is part of the mitochondrial respiratory chain. The b-c1 complex mediates electron transfer from ubiquinol to cytochrome c. Contributes to the generation of a proton gradient across the mitochondrial membrane that is then used for ATP synthesis. The chain is Cytochrome b (cob) from Zymoseptoria tritici (Speckled leaf blotch fungus).